The sequence spans 250 residues: 2,3-bisphosphoglycerate-dependent phosphoglycerate mutase (250 aa).

Substrate contacts are provided by residues 8–15 (RHGQSAWN), 21–22 (TG), Arg-60, 87–90 (ERHY), Lys-98, 114–115 (RR), and 183–184 (GN). Residue His-9 is the Tele-phosphohistidine intermediate of the active site. The active-site Proton donor/acceptor is the Glu-87.

It belongs to the phosphoglycerate mutase family. BPG-dependent PGAM subfamily. As to quaternary structure, homodimer.

It carries out the reaction (2R)-2-phosphoglycerate = (2R)-3-phosphoglycerate. It functions in the pathway carbohydrate degradation; glycolysis; pyruvate from D-glyceraldehyde 3-phosphate: step 3/5. Functionally, catalyzes the interconversion of 2-phosphoglycerate and 3-phosphoglycerate. In Nitratidesulfovibrio vulgaris (strain ATCC 29579 / DSM 644 / CCUG 34227 / NCIMB 8303 / VKM B-1760 / Hildenborough) (Desulfovibrio vulgaris), this protein is 2,3-bisphosphoglycerate-dependent phosphoglycerate mutase.